The following is a 63-amino-acid chain: Putative F-box protein At1g47702 (63 aa).

In terms of domain architecture, F-box spans Lys23–Asn63.

The protein is Putative F-box protein At1g47702 of Arabidopsis thaliana (Mouse-ear cress).